The chain runs to 358 residues: Alanine racemase (358 aa).

Lysine 34 functions as the Proton acceptor; specific for D-alanine in the catalytic mechanism. Lysine 34 is modified (N6-(pyridoxal phosphate)lysine). Arginine 129 is a substrate binding site. Residue tyrosine 254 is the Proton acceptor; specific for L-alanine of the active site. Methionine 302 is a substrate binding site.

The protein belongs to the alanine racemase family. Requires pyridoxal 5'-phosphate as cofactor.

It catalyses the reaction L-alanine = D-alanine. It functions in the pathway amino-acid biosynthesis; D-alanine biosynthesis; D-alanine from L-alanine: step 1/1. Its function is as follows. Catalyzes the interconversion of L-alanine and D-alanine. May also act on other amino acids. The sequence is that of Alanine racemase (alr) from Vibrio atlanticus (strain LGP32) (Vibrio splendidus (strain Mel32)).